A 483-amino-acid polypeptide reads, in one-letter code: Malonate-semialdehyde dehydrogenase 2 (483 aa).

Residues Phe152, Lys176, Glu179, Arg180, and Ser229 each contribute to the NAD(+) site. The active-site Nucleophile is Cys284. Glu384 is a binding site for NAD(+).

Belongs to the aldehyde dehydrogenase family. IolA subfamily. Homotetramer.

The catalysed reaction is 3-oxopropanoate + NAD(+) + CoA + H2O = hydrogencarbonate + acetyl-CoA + NADH + H(+). It carries out the reaction 2-methyl-3-oxopropanoate + NAD(+) + CoA + H2O = propanoyl-CoA + hydrogencarbonate + NADH + H(+). It functions in the pathway polyol metabolism; myo-inositol degradation into acetyl-CoA; acetyl-CoA from myo-inositol: step 7/7. Catalyzes the oxidation of malonate semialdehyde (MSA) and methylmalonate semialdehyde (MMSA) into acetyl-CoA and propanoyl-CoA, respectively. Is involved in a myo-inositol catabolic pathway. Bicarbonate, and not CO2, is the end-product of the enzymatic reaction. The sequence is that of Malonate-semialdehyde dehydrogenase 2 from Bacillus mycoides (strain KBAB4) (Bacillus weihenstephanensis).